Here is a 234-residue protein sequence, read N- to C-terminus: Uridylate kinase (234 aa).

9-12 contacts ATP; the sequence is KLSG. A UMP-binding site is contributed by glycine 51. Residues glycine 52 and arginine 56 each contribute to the ATP site. Residues aspartate 71 and 132-139 contribute to the UMP site; that span reads CGNPFFTT. Threonine 159, tyrosine 165, and aspartate 168 together coordinate ATP.

Belongs to the UMP kinase family. In terms of assembly, homohexamer.

The protein resides in the cytoplasm. It carries out the reaction UMP + ATP = UDP + ADP. It participates in pyrimidine metabolism; CTP biosynthesis via de novo pathway; UDP from UMP (UMPK route): step 1/1. Its activity is regulated as follows. Inhibited by UTP. Functionally, catalyzes the reversible phosphorylation of UMP to UDP. The protein is Uridylate kinase of Prochlorococcus marinus (strain MIT 9312).